A 306-amino-acid chain; its full sequence is MGKIKNKIVRQQQYMKALHQKNKDKLERRKERAKEEEKDPEKKRLRLSENIPATIESKRVYDETIIEDKPDEELQAELKDDEFSAYFSEERKVPKLLVTTSKRASRKCYDFASELLDCFPNAEFRKRTGDIEVHEIAEAAAKRGYTDLLVLNEDRKKTNALTLVHLPNGPSFYFTLSNLQTAKEISNHGRSTGHIPELIINNFSTRLGMTVARAFQSLFIQTPQIQGRQVVTIHCQRDFLFFRRHRYAFREKSNMPDGIGTGLQELGPRFTMRLRMVQKGVWDRKEGEVFFESNAGEESDRRKFWL.

The segment at 16 to 49 (KALHQKNKDKLERRKERAKEEEKDPEKKRLRLSE) is disordered. Basic and acidic residues predominate over residues 21–42 (KNKDKLERRKERAKEEEKDPEK). One can recognise a Brix domain in the interval 94 to 283 (PKLLVTTSKR…LRMVQKGVWD (190 aa)).

The protein is Brix domain-containing protein C4F8.04 of Schizosaccharomyces pombe (strain 972 / ATCC 24843) (Fission yeast).